The chain runs to 401 residues: Ribosomal RNA dihydrouridine synthase (401 aa).

Alanine 15, aspartate 34, asparagine 35, arginine 41, glycine 47, asparagine 52, valine 132, glutamate 371, and phenylalanine 384 together coordinate FAD.

The protein belongs to the BaiN/RdsA family. RdsA subfamily. FAD serves as cofactor.

It carries out the reaction a 5,6-dihydrouridine in mRNA + NAD(+) = a uridine in mRNA + NADH + H(+). Its function is as follows. Catalyzes the synthesis of 5,6-dihydrouridine (D) at position 2449 in 23S rRNA. The polypeptide is Ribosomal RNA dihydrouridine synthase (Haemophilus influenzae (strain ATCC 51907 / DSM 11121 / KW20 / Rd)).